Consider the following 447-residue polypeptide: Cytochrome P450 monooxygenase aunB (447 aa).

A heme-binding site is contributed by cysteine 386.

The protein belongs to the cytochrome P450 family. Heme serves as cofactor.

The catalysed reaction is 2 fonsecin B + NADPH + O2 + H(+) = aurasperone B + NADP(+) + 2 H2O. The enzyme catalyses 2 rubrofusarin B + NADPH + O2 + H(+) = aurasperone A + NADP(+) + 2 H2O. Its pathway is secondary metabolite biosynthesis. Functionally, cytochrome P450 monooxygenase; part of the gene cluster that mediates the biosynthesis of aurasperone B, a dimeric gamma-naphthopyrone. The first step in the biosynthesis of aurasperone B is the production of gamma-naphthopyrone precursor YWA1 by the non-reducing polyketide synthase albA, via condensation of one acetyl-CoA starter unit with 6 malonyl-CoA units. YWA1 is then methylated by aunE at position C-6 to yield foncesin which is further methylated at position C-8 by aunD to produce fonsecin B. A key enzyme in the biosynthetic pathway is the cytochrome P450 monooxygenase aunB which catalyzes the oxidative dimerization of fonsecin B to aurasperone B. AunB also catalyzes the oxidative dimerization of rubrofusarin B into aurasperone A. In Aspergillus niger (strain ATCC MYA-4892 / CBS 513.88 / FGSC A1513), this protein is Cytochrome P450 monooxygenase aunB.